The primary structure comprises 246 residues: MEPNTVIPKYNVRGFEIWGFRDMAQVLDHLLGSGPVKTGTLVAMNAEKLLKAEDDTALCELIKNAEYLYADGISMVRAIRRKYPQAELSRVAGADLWEALMQRAGQQGTPVFLVGGKPDVLAETEAKLRAQWNVNLVGSQDGYFTPEQREALFARIAASGAAIVTVAMGSPKQEIFMRDCRKFYPDALYMGVGGTYDVFTGHVKRAPKIWQNMGLEWLYRLLAQPSRIRRQLKLLKFVGYYYSGRL.

This sequence belongs to the glycosyltransferase 26 family.

It catalyses the reaction UDP-N-acetyl-alpha-D-mannosaminouronate + N-acetyl-alpha-D-glucosaminyl-di-trans,octa-cis-undecaprenyl diphosphate = beta-D-ManNAcA-(1-&gt;4)-alpha-D-GlcNAc-di-trans,octa-cis-undecaprenyl diphosphate + UDP + H(+). It participates in bacterial outer membrane biogenesis; enterobacterial common antigen biosynthesis. In terms of biological role, catalyzes the synthesis of Und-PP-GlcNAc-ManNAcA (Lipid II), the second lipid-linked intermediate involved in enterobacterial common antigen (ECA) synthesis. The chain is UDP-N-acetyl-D-mannosaminuronic acid transferase from Yersinia pseudotuberculosis serotype IB (strain PB1/+).